The following is a 356-amino-acid chain: MTRPVVASIDLLALRQNLQIVRRAAPGSRLWAVDKDNAYGHGVARVWSALSAADGFALLNLEEAILLREQGWKGPILLLEGFFHADELAVLDQYRLPTSVHSNWQIKALQQAKLRAPLDIYLKVNSGMNRLGFMPERVHTVWQQLRAISNVGEMTLMSHFAEAENPQGIVEPMRRIEQAAEGLDCPRSLANSAATLWHPEAHFDWVRPGIVLYGASPSGQWQDIANTGLKPVMTLRSEIIGVQNLRPGEAIGYGGLYRTTQEQRIGIVACGYADGYPRVAPSGTPVLVDGVRTTTVGRVSMDMLAVDLTPCPQAGIGAPVELWGKEIKIDDVAASSGTVGYELMCALAPRVPVVTL.

The active-site Proton acceptor; specific for D-alanine is Lys-35. Residue Lys-35 is modified to N6-(pyridoxal phosphate)lysine. Arg-130 contributes to the substrate binding site. Tyr-253 functions as the Proton acceptor; specific for L-alanine in the catalytic mechanism. Met-301 provides a ligand contact to substrate.

It belongs to the alanine racemase family. It depends on pyridoxal 5'-phosphate as a cofactor.

The enzyme catalyses L-alanine = D-alanine. Its function is as follows. Isomerizes L-alanine to D-alanine which is then oxidized to pyruvate by DadA. This chain is Alanine racemase, catabolic (dadB), found in Klebsiella aerogenes (Enterobacter aerogenes).